A 231-amino-acid polypeptide reads, in one-letter code: Uroporphyrinogen-III C-methyltransferase (231 aa).

S-adenosyl-L-homocysteine contacts are provided by residues proline 10, 85–87 (GGD), 115–116 (TS), methionine 166, and alanine 218.

It belongs to the precorrin methyltransferase family. As to quaternary structure, homodimer.

It catalyses the reaction uroporphyrinogen III + 2 S-adenosyl-L-methionine = precorrin-2 + 2 S-adenosyl-L-homocysteine + H(+). It carries out the reaction uroporphyrinogen III + S-adenosyl-L-methionine = precorrin-1 + S-adenosyl-L-homocysteine + H(+). The enzyme catalyses precorrin-1 + S-adenosyl-L-methionine = precorrin-2 + S-adenosyl-L-homocysteine. Its pathway is cofactor biosynthesis; adenosylcobalamin biosynthesis; precorrin-2 from uroporphyrinogen III: step 1/1. With respect to regulation, does not show substrate inhibition at uroporphyrinogen III concentrations of up to 20 uM, in contrast to SUMT from Sinorhizobium (previously believed to be P.denitrificans). In terms of biological role, catalyzes the two successive C-2 and C-7 methylation reactions involved in the conversion of uroporphyrinogen III to precorrin-2 via the intermediate formation of precorrin-1. It is a step in the biosynthesis of both cobalamin (vitamin B12) and coenzyme F430. The polypeptide is Uroporphyrinogen-III C-methyltransferase (cobA) (Methanobacterium ivanovii).